A 426-amino-acid chain; its full sequence is Dihydroorotase (426 aa).

Positions 55 and 57 each coordinate Zn(2+). Substrate contacts are provided by residues 57–59 (HLR) and Asn-89. Residues Asp-147, His-174, His-233, and Asp-306 each coordinate Zn(2+). Residue Asp-306 is part of the active site. Substrate is bound by residues His-310 and 324-325 (FG).

This sequence belongs to the metallo-dependent hydrolases superfamily. DHOase family. Class I DHOase subfamily. It depends on Zn(2+) as a cofactor.

It catalyses the reaction (S)-dihydroorotate + H2O = N-carbamoyl-L-aspartate + H(+). It participates in pyrimidine metabolism; UMP biosynthesis via de novo pathway; (S)-dihydroorotate from bicarbonate: step 3/3. Catalyzes the reversible cyclization of carbamoyl aspartate to dihydroorotate. This is Dihydroorotase from Thermus aquaticus.